The sequence spans 142 residues: SPbeta prophage-derived deoxyuridine 5'-triphosphate nucleotidohydrolase YosS (142 aa).

2 residues coordinate dUMP: serine 62 and asparagine 74. Aspartate 80 functions as the Proton acceptor in the catalytic mechanism. Residues tyrosine 83 and phenylalanine 91 each contribute to the dUMP site.

The protein belongs to the dUTPase family. Homotrimer. Mg(2+) serves as cofactor.

It catalyses the reaction dUTP + H2O = dUMP + diphosphate + H(+). It functions in the pathway pyrimidine metabolism; dUMP biosynthesis; dUMP from dCTP (dUTP route): step 2/2. Involved in nucleotide metabolism: produces dUMP, the immediate precursor of thymidine nucleotides and decreases the intracellular concentration of dUTP, so that uracil cannot be incorporated into DNA. The Ser-62 side chain changes its position upon ligand-binding to make contacts with the nucleotide phosphates. This is SPbeta prophage-derived deoxyuridine 5'-triphosphate nucleotidohydrolase YosS from Bacillus subtilis (strain 168).